A 183-amino-acid chain; its full sequence is Inner membrane-spanning protein YciB (183 aa).

A run of 5 helical transmembrane segments spans residues 10-30, 50-70, 72-92, 118-138, and 148-168; these read LVIF…GALI, MHLI…VFHD, AFIK…LAVS, VTWY…YVAF, and FKVF…VIYL.

Belongs to the YciB family.

It localises to the cell inner membrane. Functionally, plays a role in cell envelope biogenesis, maintenance of cell envelope integrity and membrane homeostasis. The protein is Inner membrane-spanning protein YciB of Shewanella sediminis (strain HAW-EB3).